A 313-amino-acid chain; its full sequence is Serine/threonine-protein kinase SZE1 (313 aa).

A lipid anchor (N-myristoyl glycine) is attached at Gly2. In terms of domain architecture, Protein kinase spans 43–311; sequence MELGESLGYI…EVLDNLNAIA (269 aa). ATP contacts are provided by residues 49–57 and Lys71; that span reads LGYINPKTL.

It belongs to the protein kinase superfamily. Ser/Thr protein kinase family. Component of an immune signaling complex made of, at least, SZE1, BKN2/SZE2, ZAR1 and ZED1. Interacts directly with ZED1, ZAR1 and Pseudomonas syringae HOPZ1A at the plasma membrane. N-terminal myristoylation is critical for plasma membrane localization and implication in defense responses. In terms of processing, autophosphorylated. Expressed in roots, seedlings, rosette leaves, floral organs, siliques and inflorescence stems.

The protein localises to the cell membrane. The enzyme catalyses L-seryl-[protein] + ATP = O-phospho-L-seryl-[protein] + ADP + H(+). It carries out the reaction L-threonyl-[protein] + ATP = O-phospho-L-threonyl-[protein] + ADP + H(+). Its function is as follows. Together with BKN2/SZE2 and ZED1, required for effector-triggered immunity (e.g. Pseudomonas syringae effector type III HopZ1a) via the activation of ZAR1, thus being essential for resistance against P.syringae pv. tomato DC3000 expressing HopZ1a. This is Serine/threonine-protein kinase SZE1 from Arabidopsis thaliana (Mouse-ear cress).